We begin with the raw amino-acid sequence, 291 residues long: 4-diphosphocytidyl-2-C-methyl-D-erythritol kinase (291 aa).

The active site involves K11. Residue 95–105 (PVAAGMAGGSS) coordinates ATP. The active site involves D137.

Belongs to the GHMP kinase family. IspE subfamily.

The enzyme catalyses 4-CDP-2-C-methyl-D-erythritol + ATP = 4-CDP-2-C-methyl-D-erythritol 2-phosphate + ADP + H(+). It functions in the pathway isoprenoid biosynthesis; isopentenyl diphosphate biosynthesis via DXP pathway; isopentenyl diphosphate from 1-deoxy-D-xylulose 5-phosphate: step 3/6. Catalyzes the phosphorylation of the position 2 hydroxy group of 4-diphosphocytidyl-2C-methyl-D-erythritol. The sequence is that of 4-diphosphocytidyl-2-C-methyl-D-erythritol kinase from Lachnoclostridium phytofermentans (strain ATCC 700394 / DSM 18823 / ISDg) (Clostridium phytofermentans).